The primary structure comprises 424 residues: UPF0597 protein Sputw3181_2955 (424 aa).

The protein belongs to the UPF0597 family.

The protein is UPF0597 protein Sputw3181_2955 of Shewanella sp. (strain W3-18-1).